We begin with the raw amino-acid sequence, 504 residues long: Patatin-like phospholipase domain-containing protein 2 (504 aa).

Over Met1 to Trp8 the chain is Cytoplasmic. A helical transmembrane segment spans residues Asn9–Leu29. Residues Ile10 to Lys179 enclose the PNPLA domain. The GXGXXG motif lies at Gly14–Gly19. Residues Arg30 to His42 lie on the Extracellular side of the membrane. N-linked (GlcNAc...) asparagine glycosylation is present at Asn39. Residues Ile43–Gly63 traverse the membrane as a helical segment. The GXSXG motif lies at Gly45–Gly49. Ser47 functions as the Nucleophile in the catalytic mechanism. The Cytoplasmic portion of the chain corresponds to Glu64–Glu137. Lys92 is covalently cross-linked (Glycyl lysine isopeptide (Lys-Gly) (interchain with G-Cter in ubiquitin)). Residues Leu138–Ser158 traverse the membrane as a helical segment. Topologically, residues Leu159 to Arg329 are extracellular. Catalysis depends on Asp166, which acts as the Proton acceptor. Residues Asp166–Gly168 carry the DGA/G motif. A helical transmembrane segment spans residues Leu330 to Ile350. Topologically, residues Arg351–Leu504 are cytoplasmic. Ser372 is subject to Phosphoserine; in vitro. Position 404 is a phosphoserine; by PKA and FAM20C (Ser404). Ser428 bears the Phosphoserine mark. Residues Ala463–Ala492 are disordered.

Interacts with ABHD5; this association stimulates PNPLA2 triglyceride hydrolase activity. Interacts with SERPINF1; this interaction stimulates the phospholipase A2 activity of PNPLA2. Despite a colocalization in lipid droplets, it probably does not interact with PLIN. Interacts with PLIN5; prevents interaction with ABHD5. Interacts with FAF2. Phosphorylation at Ser-404 by PKA is increased during fasting and moderate intensity exercise, and moderately increases lipolytic activity. Phosphorylation at Ser-404 is increased upon beta-adrenergic stimulation. Post-translationally, ubiquitinated by PEX2 in response to reactive oxygen species (ROS), leading to its degradation. Ubiquitination is stimulated by LDAH. Highest expression in adipose tissue. Also detected in heart, skeletal muscle, and portions of the gastrointestinal tract. Detected in normal retina and retinoblastoma cells. Detected in retinal pigment epithelium and, at lower intensity, in the inner segments of photoreceptors and in the ganglion cell layer of the neural retina (at protein level).

The protein localises to the lipid droplet. It localises to the cell membrane. The protein resides in the cytoplasm. It carries out the reaction a triacylglycerol + H2O = a diacylglycerol + a fatty acid + H(+). It catalyses the reaction a triacylglycerol + H2O = a 1,2-diacylglycerol + a fatty acid + H(+). The catalysed reaction is a triacylglycerol + H2O = a 1,3-diacylglycerol + a fatty acid + H(+). The enzyme catalyses a triacyl-sn-glycerol + H2O = a 1,3-diacyl-sn-glycerol + a fatty acid + H(+). It carries out the reaction a triacyl-sn-glycerol + H2O = a 2,3-diacyl-sn-glycerol + a fatty acid + H(+). It catalyses the reaction a 1-acylglycerol + a 1,3-diacylglycerol = a triacylglycerol + glycerol. The catalysed reaction is a 1-acylglycerol + a 1,2-diacylglycerol = a triacylglycerol + glycerol. The enzyme catalyses 2 a 1-acylglycerol = a 1,2-diacylglycerol + glycerol. It carries out the reaction a triacylglycerol + all-trans-retinol = an all-trans-retinyl ester + a diacylglycerol. It catalyses the reaction 1,2-di-(9Z-octadecenoyl)-glycerol + (9Z)-octadecenoate + H(+) = 1,2,3-tri-(9Z-octadecenoyl)-glycerol + H2O. The catalysed reaction is 1,2,3-tri-(9Z-octadecenoyl)-glycerol + H2O = 1,3-di-(9Z-octadecenoyl)-glycerol + (9Z)-octadecenoate + H(+). The enzyme catalyses 1-(9Z-octadecenoyl)-glycerol + 1,3-di-(9Z-octadecenoyl)-glycerol = 1,2,3-tri-(9Z-octadecenoyl)-glycerol + glycerol. It carries out the reaction 1-(9Z-octadecenoyl)-glycerol + 1,2-di-(9Z-octadecenoyl)-glycerol = 1,2,3-tri-(9Z-octadecenoyl)-glycerol + glycerol. It catalyses the reaction 2 1-(9Z-octadecenoyl)-glycerol = 1,2-di-(9Z-octadecenoyl)-glycerol + glycerol. The catalysed reaction is 1,2,3-tri-(9Z-octadecenoyl)-glycerol + all-trans-retinol = all-trans-retinyl 9Z-octadecenoate + di-(9Z)-octadecenoylglycerol. The enzyme catalyses 1,2,3-tri-(9Z)-hexadecenoylglycerol + H2O = 1,3-di-(9Z)-hexadecenoylglycerol + (9Z)-hexadecenoate + H(+). It carries out the reaction 1,2,3-tri-(9Z,12Z)-octadecadienoylglycerol + H2O = 1,3-di-(9Z,12Z)-octadecadienoylglycerol + (9Z,12Z)-octadecadienoate + H(+). It catalyses the reaction 1,2,3-tri-(9Z,12Z,15Z)-octadecatrienoylglycerol + H2O = 1,3-di-(9Z,12Z,15Z)-octadecatrienoylglycerol + (9Z,12Z,15Z)-octadecatrienoate + H(+). The catalysed reaction is 1,3-di-(9Z)-octadecenoyl-2-hexadecanoylglycerol + H2O = 1,3-di-(9Z-octadecenoyl)-glycerol + hexadecanoate + H(+). The enzyme catalyses 1,2-di-(9Z)-octadecenoyl-3-hexadecanoyl-sn-glycerol + H2O = 1-(9Z)-octadecenoyl-3-hexadecanoyl-sn-glycerol + (9Z)-octadecenoate + H(+). It carries out the reaction 1-hexadecanoyl-2,3-di-(9Z)-octadecenoyl-sn-glycerol + H2O = 1-hexadecanoyl-3-(9Z)-octadecenoyl-sn-glycerol + (9Z)-octadecenoate + H(+). It catalyses the reaction 1,2,3-tri-(9Z-octadecenoyl)-glycerol + H2O = 2,3-di-(9Z)-octadecenoyl-sn-glycerol + (9Z)-octadecenoate + H(+). The catalysed reaction is 1,2,3-tri-(9Z)-hexadecenoylglycerol + H2O = 2,3-di-(9Z)-hexadecenoyl-sn-glycerol + (9Z)-hexadecenoate + H(+). The enzyme catalyses 1,2,3-tri-(9Z,12Z)-octadecadienoylglycerol + H2O = 2,3-di-(9Z,12Z)-octadecadienoyl-sn-glycerol + (9Z,12Z)-octadecadienoate + H(+). It carries out the reaction 1,2,3-tri-(9Z,12Z,15Z)-octadecatrienoylglycerol + H2O = 2,3-di-(9Z,12Z,15Z)-octadecatrienoyl-sn-glycerol + (9Z,12Z,15Z)-octadecatrienoate + H(+). It catalyses the reaction 1,3-di-(9Z)-octadecenoyl-2-hexadecanoylglycerol + H2O = 2-hexadecanoyl-3-(9Z)-octadecenoyl-sn-glycerol + (9Z)-octadecenoate + H(+). The catalysed reaction is 1-hexadecanoyl-2,3-di-(9Z)-octadecenoyl-sn-glycerol + H2O = 2,3-di-(9Z)-octadecenoyl-sn-glycerol + hexadecanoate + H(+). The enzyme catalyses 1,2-di-(9Z)-octadecenoyl-3-hexadecanoyl-sn-glycerol + H2O = 2-(9Z-octadecenoyl)-3-hexadecanoyl-sn-glycerol + (9Z)-octadecenoate + H(+). It carries out the reaction a 1,2-diacyl-sn-glycero-3-phosphocholine + H2O = a 1-acyl-sn-glycero-3-phosphocholine + a fatty acid + H(+). It catalyses the reaction 1,2,3-tri-(9Z-octadecenoyl)-glycerol + 9-hydroxy-octadecanoate = 9-(9Z-octadecenoyloxy)-octadecanoate + 2,3-di-(9Z)-octadecenoyl-sn-glycerol. The catalysed reaction is 1-hexadecanoyl-2,3-di-(9Z)-octadecenoyl-sn-glycerol + 9-hydroxy-octadecanoate = 9-hexadecanoyloxy-octadecanoate + 2,3-di-(9Z)-octadecenoyl-sn-glycerol. The enzyme catalyses 1,2,3-tri-(10Z)-heptadecenoylglycerol + 9-hydroxy-octadecanoate = 2,3-di-(10Z-heptadecenoyl)-sn-glycerol + 9-(10Z-heptadecenoyloxy)-octadecanoate. It carries out the reaction 1,2,3-tri-(9Z,12Z)-octadecadienoylglycerol + 9-hydroxy-octadecanoate = 2,3-di-(9Z,12Z)-octadecadienoyl-sn-glycerol + 9-(9Z,12Z-octadecadienoyloxy)-octadecanoate. It catalyses the reaction 1,2,3-tri-(9Z)-hexadecenoylglycerol + 9-hydroxy-octadecanoate = 2,3-di-(9Z)-hexadecenoyl-sn-glycerol + 9-(9Z-hexadecenoyloxy)-octadecanoate. The catalysed reaction is 9-hydroxy-octadecanoate + 1,2-di-(9Z-octadecenoyl)-sn-glycerol = 9-(9Z-octadecenoyloxy)-octadecanoate + 2-(9Z-octadecenoyl)-glycerol. The enzyme catalyses 1-hexadecanoyl-2,3-di-(9Z)-octadecenoyl-sn-glycerol + 9-hydroxy-octadecanoate = 1-hexadecanoyl-3-(9Z)-octadecenoyl-sn-glycerol + 9-(9Z-octadecenoyloxy)-octadecanoate. The protein operates within glycerolipid metabolism; triacylglycerol degradation. Its activity is regulated as follows. The triglyceride lipase activity is inhibited by BEL ((E)-6-(bromomethylene)-3-(1-naphthalenyl)-2H-tetrahydropyran-2-one), a suicide substrate inhibitor. No differences in the acylglycerol transacylase was detected in the presence or absence of ATP. In terms of biological role, catalyzes the initial step in triglyceride hydrolysis in adipocyte and non-adipocyte lipid droplets. Exhibits a strong preference for the hydrolysis of long-chain fatty acid esters at the sn-2 position of the glycerol backbone and acts coordinately with LIPE/HLS and DGAT2 within the lipolytic cascade. Also possesses acylglycerol transacylase and phospholipase A2 activities. Transfers fatty acid from triglyceride to retinol, hydrolyzes retinylesters, and generates 1,3-diacylglycerol from triglycerides. Regulates adiposome size and may be involved in the degradation of adiposomes. Catalyzes the formation of an ester bond between hydroxy fatty acids and fatty acids derived from triglycerides or diglycerides to generate fatty acid esters of hydroxy fatty acids (FAHFAs) in adipocytes. Acts antagonistically with LDAH in regulation of cellular lipid stores. Inhibits LDAH-stimulated lipid droplet fusion. May play an important role in energy homeostasis. May play a role in the response of the organism to starvation, enhancing hydrolysis of triglycerides and providing free fatty acids to other tissues to be oxidized in situations of energy depletion. The sequence is that of Patatin-like phospholipase domain-containing protein 2 from Homo sapiens (Human).